We begin with the raw amino-acid sequence, 575 residues long: V-type ATP synthase alpha chain (575 aa).

Position 238–245 (238–245 (GPFGAGKT)) interacts with ATP.

This sequence belongs to the ATPase alpha/beta chains family.

The catalysed reaction is ATP + H2O + 4 H(+)(in) = ADP + phosphate + 5 H(+)(out). Functionally, produces ATP from ADP in the presence of a proton gradient across the membrane. The V-type alpha chain is a catalytic subunit. This Borreliella afzelii (strain PKo) (Borrelia afzelii) protein is V-type ATP synthase alpha chain.